Reading from the N-terminus, the 375-residue chain is Actin, cytoplasmic (375 aa).

The protein belongs to the actin family.

The protein localises to the cytoplasm. It localises to the cytoskeleton. The catalysed reaction is ATP + H2O = ADP + phosphate + H(+). Actins are highly conserved proteins that are involved in various types of cell motility and are ubiquitously expressed in all eukaryotic cells. In Sterkiella nova (Ciliate), this protein is Actin, cytoplasmic (MIC-ACT-1).